Here is a 373-residue protein sequence, read N- to C-terminus: Valienol-1-phosphate guanylyltransferase (373 aa).

Residues glycine 177 and 192–193 (EK) each bind substrate.

The protein belongs to the bacterial/plant glucose-1-phosphate adenylyltransferase family. Mg(2+) serves as cofactor.

The catalysed reaction is valienol 1-phosphate + GTP + H(+) = GDP-valienol + diphosphate. Involved in the biosynthesis of the antifungal agent validamycin A. Catalyzes the conversion of valienol 1-phosphate to GDP-valienol and less effectively to ADP-valienol or other NDP derivatives. In Streptomyces hygroscopicus subsp. limoneus, this protein is Valienol-1-phosphate guanylyltransferase.